The sequence spans 526 residues: Acetyl-CoA hydrolase (526 aa).

Residue Thr2 is modified to N-acetylthreonine. 277–281 is a CoA binding site; that stretch reads GIGNI. Glu302 functions as the 5-glutamyl coenzyme A thioester intermediate in the catalytic mechanism. Ser350 carries the phosphoserine modification. CoA contacts are provided by Asn392 and Gly396.

Belongs to the acetyl-CoA hydrolase/transferase family. Monomer. Glycosylated; contains mannose.

It is found in the cytoplasm. The enzyme catalyses acetyl-CoA + H2O = acetate + CoA + H(+). Its function is as follows. Presumably involved in regulating the intracellular acetyl-CoA pool for fatty acid and cholesterol synthesis and fatty acid oxidation. It may be involved in overall regulation of acetylation during melatonin synthesis. The sequence is that of Acetyl-CoA hydrolase (ACH1) from Saccharomyces cerevisiae (strain ATCC 204508 / S288c) (Baker's yeast).